The chain runs to 88 residues: Translation initiation factor IF-1 1 (88 aa).

The S1-like domain maps to 1 to 72 (MAKEELIELD…TKGRINFRHK (72 aa)).

Belongs to the IF-1 family. As to quaternary structure, component of the 30S ribosomal translation pre-initiation complex which assembles on the 30S ribosome in the order IF-2 and IF-3, IF-1 and N-formylmethionyl-tRNA(fMet); mRNA recruitment can occur at any time during PIC assembly.

It localises to the cytoplasm. In terms of biological role, one of the essential components for the initiation of protein synthesis. Stabilizes the binding of IF-2 and IF-3 on the 30S subunit to which N-formylmethionyl-tRNA(fMet) subsequently binds. Helps modulate mRNA selection, yielding the 30S pre-initiation complex (PIC). Upon addition of the 50S ribosomal subunit IF-1, IF-2 and IF-3 are released leaving the mature 70S translation initiation complex. This is Translation initiation factor IF-1 1 from Burkholderia mallei (strain ATCC 23344).